Reading from the N-terminus, the 72-residue chain is Translation initiation factor IF-1 (72 aa).

The region spanning 1 to 72 (MAKEDSIRMQ…NKGRIVYRER (72 aa)) is the S1-like domain.

Belongs to the IF-1 family. As to quaternary structure, component of the 30S ribosomal translation pre-initiation complex which assembles on the 30S ribosome in the order IF-2 and IF-3, IF-1 and N-formylmethionyl-tRNA(fMet); mRNA recruitment can occur at any time during PIC assembly.

It is found in the cytoplasm. Its function is as follows. One of the essential components for the initiation of protein synthesis. Stabilizes the binding of IF-2 and IF-3 on the 30S subunit to which N-formylmethionyl-tRNA(fMet) subsequently binds. Helps modulate mRNA selection, yielding the 30S pre-initiation complex (PIC). Upon addition of the 50S ribosomal subunit IF-1, IF-2 and IF-3 are released leaving the mature 70S translation initiation complex. The polypeptide is Translation initiation factor IF-1 (Halorhodospira halophila (strain DSM 244 / SL1) (Ectothiorhodospira halophila (strain DSM 244 / SL1))).